Reading from the N-terminus, the 152-residue chain is UPF0179 protein Mlab_1307 (152 aa).

Belongs to the UPF0179 family.

This chain is UPF0179 protein Mlab_1307, found in Methanocorpusculum labreanum (strain ATCC 43576 / DSM 4855 / Z).